Here is a 516-residue protein sequence, read N- to C-terminus: Cytochrome P450 monooxygenase dtxS2 (516 aa).

The chain crosses the membrane as a helical span at residues 23–43 (ILASVIVLLGLKVATILYTAF). Residue Asn-187 is glycosylated (N-linked (GlcNAc...) asparagine). The chain crosses the membrane as a helical span at residues 229–249 (VLVPLLVFPYISWLLVWWLLS). Residue Cys-458 coordinates heme.

It belongs to the cytochrome P450 family. The cofactor is heme.

The protein localises to the membrane. It participates in secondary metabolite biosynthesis. Functionally, cytochrome P450 monooxygenase; part of the gene cluster that mediates the biosynthesis of destruxins, insecticidal cyclic hexadepsipeptides which induce flaccid paralysis and visceral muscle contraction in insects through targeting the calcium channels and vacuolar-type ATPases. The aldo-keto reductase dtxS3 converts alpha-ketoisocaproic acid from deaminated leucine into alpha-hydroxyisocaproic acid (HIC), which is the first substrate for destruxin assembly by dtxS1. L-aspartate decarboxylase dtxS4 converts aspartic acid into beta-alanine, the last substrate for the destruxin assembly line performed by dtxS1. The nonribosomal peptide synthetase dtxS1 synthesizes destruxins B and B2, whereas the cytochrome P450 monooxygenase dtxS2 is required to convert destruxin B into other destruxin derivatives, including destructins C, D, A and E. Destruxin E-diol (ED) is further produced in a non-enzymatic manner from destruxin E. Destruxins play an important role in virulence and escape from insect host immune defenses. The polypeptide is Cytochrome P450 monooxygenase dtxS2 (Metarhizium robertsii (strain ARSEF 23 / ATCC MYA-3075) (Metarhizium anisopliae (strain ARSEF 23))).